The chain runs to 119 residues: DNA-directed RNA polymerase subunit omega (119 aa).

It belongs to the RNA polymerase subunit omega family. The RNAP catalytic core consists of 2 alpha, 1 beta, 1 beta' and 1 omega subunit. When a sigma factor is associated with the core the holoenzyme is formed, which can initiate transcription.

The enzyme catalyses RNA(n) + a ribonucleoside 5'-triphosphate = RNA(n+1) + diphosphate. Promotes RNA polymerase assembly. Latches the N- and C-terminal regions of the beta' subunit thereby facilitating its interaction with the beta and alpha subunits. The sequence is that of DNA-directed RNA polymerase subunit omega from Caulobacter sp. (strain K31).